A 551-amino-acid chain; its full sequence is CTP synthase (551 aa).

An amidoligase domain region spans residues 1-267; that stretch reads MSGTKYIFVT…DALVLEKLGL (267 aa). Ser15 provides a ligand contact to CTP. Ser15 lines the UTP pocket. 16-21 is an ATP binding site; it reads SIGKGT. Residue Tyr56 coordinates L-glutamine. Position 73 (Asp73) interacts with ATP. Positions 73 and 141 each coordinate Mg(2+). Residues 148-150, 188-193, and Lys224 each bind CTP; these read DIE and KTKPTQ. Residues 188–193 and Lys224 contribute to the UTP site; that span reads KTKPTQ. The 243-residue stretch at 292 to 534 folds into the Glutamine amidotransferase type-1 domain; that stretch reads RVAVIGKYIR…VGACLGAAEE (243 aa). Gly355 is an L-glutamine binding site. Cys382 acts as the Nucleophile; for glutamine hydrolysis in catalysis. L-glutamine contacts are provided by residues 383 to 386, Glu406, and Arg462; that span reads LGMQ. Residues His507 and Glu509 contribute to the active site.

Belongs to the CTP synthase family. Homotetramer.

It catalyses the reaction UTP + L-glutamine + ATP + H2O = CTP + L-glutamate + ADP + phosphate + 2 H(+). The catalysed reaction is L-glutamine + H2O = L-glutamate + NH4(+). It carries out the reaction UTP + NH4(+) + ATP = CTP + ADP + phosphate + 2 H(+). It participates in pyrimidine metabolism; CTP biosynthesis via de novo pathway; CTP from UDP: step 2/2. Allosterically activated by GTP, when glutamine is the substrate; GTP has no effect on the reaction when ammonia is the substrate. The allosteric effector GTP functions by stabilizing the protein conformation that binds the tetrahedral intermediate(s) formed during glutamine hydrolysis. Inhibited by the product CTP, via allosteric rather than competitive inhibition. Its function is as follows. Catalyzes the ATP-dependent amination of UTP to CTP with either L-glutamine or ammonia as the source of nitrogen. Regulates intracellular CTP levels through interactions with the four ribonucleotide triphosphates. The polypeptide is CTP synthase (Rubrobacter xylanophilus (strain DSM 9941 / JCM 11954 / NBRC 16129 / PRD-1)).